A 369-amino-acid chain; its full sequence is Xylene/toluene monooxygenase hydroxylase component XylM (369 aa).

The next 3 membrane-spanning stretches (helical) occupy residues 8 to 28 (LIPVVTACGLIGFYYGGYWVW), 60 to 80 (LTQYLQLPLMIGLYGLLVFGV), and 91 to 111 (LQVAGCILSLAWLSGVPTLPV). Positions 113, 117, 143, 147, and 148 each coordinate Fe cation. Residues 207 to 227 (VALLLALPGLVSYLGGPALGL) form a helical membrane-spanning segment. Positions 282, 285, and 286 each coordinate Fe cation. The chain crosses the membrane as a helical span at residues 305-325 (MPSLFVCFLLGLIPPLWFALI).

The protein belongs to the fatty acid desaturase type 1 family. AlkB subfamily. As to quaternary structure, the xylene/toluene monooxygenase is composed of two subunits: the electron transfer component XylA and the hydroxylase component XylM. The cofactor is Fe(2+).

The protein localises to the cell inner membrane. The enzyme catalyses m-xylene + 2 reduced [2Fe-2S]-[ferredoxin] + O2 + 2 H(+) = 3-methylbenzyl alcohol + 2 oxidized [2Fe-2S]-[ferredoxin] + H2O. It carries out the reaction p-xylene + 2 reduced [2Fe-2S]-[ferredoxin] + O2 + 2 H(+) = 4-methylbenzyl alcohol + 2 oxidized [2Fe-2S]-[ferredoxin] + H2O. The catalysed reaction is toluene + 2 reduced [2Fe-2S]-[ferredoxin] + O2 + 2 H(+) = benzyl alcohol + 2 oxidized [2Fe-2S]-[ferredoxin] + H2O. Component of a monooxygenase that catalyzes the first step in the degradation of xylenes and toluenes. XylM catalyzes the hydroxylation of the methyl side chain of xylenes and toluenes. The electrons are provided by the electron transfer component XylA. The best substrates are m-xylene and p-xylene, followed by toluene. Shows weak activity with o-xylene. In vitro, is also active with substituted compounds, such as chlorotoluenes. Cannot use benzyl alcohol. The sequence is that of Xylene/toluene monooxygenase hydroxylase component XylM from Pseudomonas putida (Arthrobacter siderocapsulatus).